Here is a 96-residue protein sequence, read N- to C-terminus: Integration host factor subunit beta (96 aa).

A disordered region spans residues 59–86; that stretch reads RVGRNPKTGETVELDGKHVPHFKPGKEL. The span at 72-86 shows a compositional bias: basic and acidic residues; that stretch reads LDGKHVPHFKPGKEL.

It belongs to the bacterial histone-like protein family. Heterodimer of an alpha and a beta chain.

This protein is one of the two subunits of integration host factor, a specific DNA-binding protein that functions in genetic recombination as well as in transcriptional and translational control. This chain is Integration host factor subunit beta, found in Pseudoalteromonas atlantica (strain T6c / ATCC BAA-1087).